Consider the following 525-residue polypeptide: GMP synthase [glutamine-hydrolyzing] (525 aa).

The region spanning 9–207 (RILILDFGSQ…ILDICGCEAL (199 aa)) is the Glutamine amidotransferase type-1 domain. Residue Cys-86 is the Nucleophile of the active site. Active-site residues include His-181 and Glu-183. Residues 208 to 400 (WTPSKIAEDA…LGLPYDMVYR (193 aa)) form the GMPS ATP-PPase domain. 235-241 (SGGVDSS) is an ATP binding site.

In terms of assembly, homodimer.

It carries out the reaction XMP + L-glutamine + ATP + H2O = GMP + L-glutamate + AMP + diphosphate + 2 H(+). It functions in the pathway purine metabolism; GMP biosynthesis; GMP from XMP (L-Gln route): step 1/1. Functionally, catalyzes the synthesis of GMP from XMP. The polypeptide is GMP synthase [glutamine-hydrolyzing] (Pseudomonas savastanoi pv. phaseolicola (strain 1448A / Race 6) (Pseudomonas syringae pv. phaseolicola (strain 1448A / Race 6))).